We begin with the raw amino-acid sequence, 513 residues long: ATP synthase subunit alpha (513 aa).

169–176 (GDRQTGKT) contacts ATP.

The protein belongs to the ATPase alpha/beta chains family. F-type ATPases have 2 components, CF(1) - the catalytic core - and CF(0) - the membrane proton channel. CF(1) has five subunits: alpha(3), beta(3), gamma(1), delta(1), epsilon(1). CF(0) has three main subunits: a(1), b(2) and c(9-12). The alpha and beta chains form an alternating ring which encloses part of the gamma chain. CF(1) is attached to CF(0) by a central stalk formed by the gamma and epsilon chains, while a peripheral stalk is formed by the delta and b chains.

Its subcellular location is the cell inner membrane. It catalyses the reaction ATP + H2O + 4 H(+)(in) = ADP + phosphate + 5 H(+)(out). Produces ATP from ADP in the presence of a proton gradient across the membrane. The alpha chain is a regulatory subunit. The polypeptide is ATP synthase subunit alpha (Haemophilus influenzae (strain ATCC 51907 / DSM 11121 / KW20 / Rd)).